Reading from the N-terminus, the 199-residue chain is NADH-quinone oxidoreductase subunit C (199 aa).

This sequence belongs to the complex I 30 kDa subunit family. In terms of assembly, NDH-1 is composed of 14 different subunits. Subunits NuoB, C, D, E, F, and G constitute the peripheral sector of the complex.

It is found in the cell inner membrane. It catalyses the reaction a quinone + NADH + 5 H(+)(in) = a quinol + NAD(+) + 4 H(+)(out). Functionally, NDH-1 shuttles electrons from NADH, via FMN and iron-sulfur (Fe-S) centers, to quinones in the respiratory chain. The immediate electron acceptor for the enzyme in this species is believed to be ubiquinone. Couples the redox reaction to proton translocation (for every two electrons transferred, four hydrogen ions are translocated across the cytoplasmic membrane), and thus conserves the redox energy in a proton gradient. This Leptothrix cholodnii (strain ATCC 51168 / LMG 8142 / SP-6) (Leptothrix discophora (strain SP-6)) protein is NADH-quinone oxidoreductase subunit C.